Reading from the N-terminus, the 100-residue chain is Small ribosomal subunit protein uS14m (100 aa).

The protein belongs to the universal ribosomal protein uS14 family.

Its subcellular location is the mitochondrion. The protein is Small ribosomal subunit protein uS14m (RPS14) of Brassica napus (Rape).